The following is a 494-amino-acid chain: Alpha-amylase-related protein (494 aa).

The first 20 residues, 1 to 20 (MIKFALALTLCLAGASLSLA), serve as a signal peptide directing secretion. Q21 carries the pyrrolidone carboxylic acid modification. C48 and C104 are joined by a disulfide. N118, Q169, and D178 together coordinate Ca(2+). Residues C157 and C171 are joined by a disulfide bond. Residue R206 participates in chloride binding. The Nucleophile role is filled by D208. H212 provides a ligand contact to Ca(2+). E245 functions as the Proton donor in the catalytic mechanism. Residues N308 and R343 each coordinate chloride. Intrachain disulfides connect C376/C382, C418/C441, and C448/C460.

The protein belongs to the glycosyl hydrolase 13 family. As to quaternary structure, monomer. Ca(2+) is required as a cofactor. Chloride serves as cofactor.

It localises to the secreted. The catalysed reaction is Endohydrolysis of (1-&gt;4)-alpha-D-glucosidic linkages in polysaccharides containing three or more (1-&gt;4)-alpha-linked D-glucose units.. In Drosophila kikkawai (Fruit fly), this protein is Alpha-amylase-related protein (Amyrel).